The following is a 425-amino-acid chain: Glutamate-1-semialdehyde 2,1-aminomutase (425 aa).

N6-(pyridoxal phosphate)lysine is present on Lys-264.

It belongs to the class-III pyridoxal-phosphate-dependent aminotransferase family. HemL subfamily. Homodimer. Pyridoxal 5'-phosphate serves as cofactor.

It localises to the cytoplasm. The enzyme catalyses (S)-4-amino-5-oxopentanoate = 5-aminolevulinate. Its pathway is porphyrin-containing compound metabolism; protoporphyrin-IX biosynthesis; 5-aminolevulinate from L-glutamyl-tRNA(Glu): step 2/2. The chain is Glutamate-1-semialdehyde 2,1-aminomutase from Campylobacter lari (strain RM2100 / D67 / ATCC BAA-1060).